We begin with the raw amino-acid sequence, 564 residues long: MAFKFNWSPLIADASFYTRAQDLLTAALNKSPKPPIIVGDITVTELNLGSIPPELEILEIGDLAEDRFRGIFKMSYTGDAFLTLKTRVQANPLNTYLITRPSFASPLPLAAATPLTIPLQITLSDFKLSGFVILVFSEQKGITLVFRNDPLESLKVSSTFDSIPFVRDFLQGEIEAQLRILFIDELPAIIHRLSLQLWDPEYRAEEIQNQMNTTLTPTKGPGHDPLVTPPQDPVDSLGNVLDESDIASLSLDSAAETHSLFSQKNLLSLATLTDSQRTLSLFTPSIQQVVYRAWSSPDQNDSSASVMSPISPPLSRTQSQTGGIFASIDNASTSSAQSRTPTGPTQSFSSYGLSLGASRHSRAHARRRKKRVVDLRSRPTTPSDSASVSVSDESTYTESASAPSVTSAPLQAIHEQPDDPVTPPLSPESDQSLPAIVEERRLSLSRSLPRRDLSSEIVRDRAEPSEPRNPFNTDDVIVTVGSVRPTPHQEASPPLGPTRQLSAAGLPFPHDSSTGSVVDQVFLDTLAGEVARRMRDEKLMAPNSCGTFCGHGLPEEPPPPAYGQ.

The SMP-LTD domain maps to 1-195 (MAFKFNWSPL…LPAIIHRLSL (195 aa)). Polar residues-rich tracts occupy residues 297 to 322 (PDQNDSSASVMSPISPPLSRTQSQTG) and 329 to 352 (DNASTSSAQSRTPTGPTQSFSSYG). Disordered stretches follow at residues 297 to 408 (PDQN…VTSA), 414 to 433 (HEQPDDPVTPPLSPESDQSL), and 452 to 473 (DLSSEIVRDRAEPSEPRNPFNT). Residues 359 to 371 (RHSRAHARRRKKR) show a composition bias toward basic residues. Low complexity predominate over residues 383 to 394 (SDSASVSVSDES). Positions 396–408 (YTESASAPSVTSA) are enriched in polar residues. Over residues 452-466 (DLSSEIVRDRAEPSE) the composition is skewed to basic and acidic residues.

The protein belongs to the MDM34 family. Component of the ER-mitochondria encounter structure (ERMES) or MDM complex, composed of mmm1, mdm10, mdm12 and mdm34.

Its subcellular location is the mitochondrion outer membrane. In terms of biological role, component of the ERMES/MDM complex, which serves as a molecular tether to connect the endoplasmic reticulum (ER) and mitochondria. Components of this complex are involved in the control of mitochondrial shape and protein biogenesis, and function in nonvesicular lipid trafficking between the ER and mitochondria. Mdm34 is required for the interaction of the ER-resident membrane protein mmm1 and the outer mitochondrial membrane-resident beta-barrel protein mdm10. The protein is Mitochondrial distribution and morphology protein 34-1 of Penicillium rubens (strain ATCC 28089 / DSM 1075 / NRRL 1951 / Wisconsin 54-1255) (Penicillium chrysogenum).